Here is a 188-residue protein sequence, read N- to C-terminus: ATP-dependent Clp protease proteolytic subunit 1 (188 aa).

Ser-90 acts as the Nucleophile in catalysis. His-115 is a catalytic residue.

This sequence belongs to the peptidase S14 family. As to quaternary structure, fourteen ClpP subunits assemble into 2 heptameric rings which stack back to back to give a disk-like structure with a central cavity, resembling the structure of eukaryotic proteasomes.

It is found in the cytoplasm. It carries out the reaction Hydrolysis of proteins to small peptides in the presence of ATP and magnesium. alpha-casein is the usual test substrate. In the absence of ATP, only oligopeptides shorter than five residues are hydrolyzed (such as succinyl-Leu-Tyr-|-NHMec, and Leu-Tyr-Leu-|-Tyr-Trp, in which cleavage of the -Tyr-|-Leu- and -Tyr-|-Trp bonds also occurs).. Functionally, cleaves peptides in various proteins in a process that requires ATP hydrolysis. Has a chymotrypsin-like activity. Plays a major role in the degradation of misfolded proteins. The polypeptide is ATP-dependent Clp protease proteolytic subunit 1 (Corynebacterium jeikeium (strain K411)).